The sequence spans 348 residues: Uroporphyrinogen decarboxylase (348 aa).

Substrate contacts are provided by residues 27–31 (RQAGR), Phe-46, Asp-76, Tyr-152, Ser-207, and His-320.

The protein belongs to the uroporphyrinogen decarboxylase family. As to quaternary structure, homodimer.

The protein resides in the cytoplasm. The enzyme catalyses uroporphyrinogen III + 4 H(+) = coproporphyrinogen III + 4 CO2. The protein operates within porphyrin-containing compound metabolism; protoporphyrin-IX biosynthesis; coproporphyrinogen-III from 5-aminolevulinate: step 4/4. Functionally, catalyzes the decarboxylation of four acetate groups of uroporphyrinogen-III to yield coproporphyrinogen-III. In Bacillus cereus (strain AH820), this protein is Uroporphyrinogen decarboxylase.